Reading from the N-terminus, the 88-residue chain is Small ribosomal subunit protein bS20 (88 aa).

Residues 1 to 27 (MANSKSAKKRALQSEKRRQHNASRRSM) form a disordered region.

It belongs to the bacterial ribosomal protein bS20 family.

In terms of biological role, binds directly to 16S ribosomal RNA. The chain is Small ribosomal subunit protein bS20 from Shewanella sp. (strain ANA-3).